Consider the following 305-residue polypeptide: Hydrogen peroxide-inducible genes activator (305 aa).

Residues 1–58 (MNIRDLEYLVALAEHRHFRRAADSCHVSQPTLSGQIRKLEDELGVMLLERTSRKVLFT) form the HTH lysR-type domain. A DNA-binding region (H-T-H motif) is located at residues 18–37 (FRRAADSCHVSQPTLSGQIR). 2 disulfide bridges follow: C180–C259 and C199–C208. C199 carries the post-translational modification Cysteine sulfenic acid (-SOH); alternate. C199 is modified (S-glutathionyl cysteine; alternate). Position 199 is an S-nitrosocysteine; alternate (C199).

The protein belongs to the LysR transcriptional regulatory family. As to quaternary structure, homodimer and homotetramer. In terms of processing, oxidized on Cys-199; the Cys-SOH formed in response to oxidative signaling triggers a conformational change and the onset of transcriptional activity with a specific DNA-binding affinity. Cys-199-SOH rapidly reacts with Cys-208-SH to form a disulfide bond. S-nitrosylation in response to nitrosative signaling triggers a conformational change and the onset of transcriptional activity with a specific DNA-binding affinity. Post-translationally, glutathionylation in response to redox signaling triggers the onset of transcriptional activity with a specific DNA-binding affinity.

Its activity is regulated as follows. Activated by oxidation of Cys-199 resulting in the alternative formation of cystine, sulfenic acid, S-nitroso- or glutathione-bound cysteine. Functionally, hydrogen peroxide sensor. Activates the expression of a regulon of hydrogen peroxide-inducible genes such as katG, gor, ahpC, ahpF, oxyS (a regulatory RNA), dps, fur and grxA. OxyR expression is negatively autoregulated by binding to a 43 bp region upstream of its own coding sequence. OxyR is inactivated by reduction of its essential disulfide bond by the product of GrxA, itself positively regulated by OxyR. Also has a positive regulatory effect on the production of surface proteins that control the colony morphology and auto-aggregation ability. The chain is Hydrogen peroxide-inducible genes activator (oxyR) from Escherichia coli O157:H7.